Consider the following 356-residue polypeptide: tRNA N6-adenosine threonylcarbamoyltransferase (356 aa).

Fe cation contacts are provided by His111 and His115. Substrate-binding positions include 143-147, Asp178, Gly191, Asp195, and Asn286; that span reads LASGG. Asp314 contacts Fe cation.

It belongs to the KAE1 / TsaD family. The cofactor is Fe(2+).

It localises to the cytoplasm. It catalyses the reaction L-threonylcarbamoyladenylate + adenosine(37) in tRNA = N(6)-L-threonylcarbamoyladenosine(37) in tRNA + AMP + H(+). Required for the formation of a threonylcarbamoyl group on adenosine at position 37 (t(6)A37) in tRNAs that read codons beginning with adenine. Is involved in the transfer of the threonylcarbamoyl moiety of threonylcarbamoyl-AMP (TC-AMP) to the N6 group of A37, together with TsaE and TsaB. TsaD likely plays a direct catalytic role in this reaction. The chain is tRNA N6-adenosine threonylcarbamoyltransferase from Sorangium cellulosum (strain So ce56) (Polyangium cellulosum (strain So ce56)).